The following is a 1395-amino-acid chain: G2/mitotic-specific cyclin-B3 (1395 aa).

Positions 1 to 59 (MLLPLPPQSSKPVPKKSQSSKIVPSHHDPSEKTGENCQTKISPSSLQESPSSLQGALKK) are disordered. The segment covering 10–23 (SKPVPKKSQSSKIV) has biased composition (low complexity). The segment covering 25-34 (SHHDPSEKTG) has biased composition (basic and acidic residues). Positions 42–54 (SPSSLQESPSSLQ) are enriched in low complexity. Positions 60–68 (RSAFEDLTN) match the D-box motif. 2 disordered regions span residues 418–464 (LSIK…PTEE) and 1074–1122 (ATMT…DSSD). Positions 419–431 (SIKEKPSTEKESF) are enriched in basic and acidic residues. Positions 1082 to 1093 (SRTTTESSACES) are enriched in low complexity.

The protein belongs to the cyclin family. Cyclin AB subfamily. Interacts with CDK2 kinase. Ubiquitinated. Ubiquitination leads to its degradation during anaphase entry, after degradation of CCNB1. Testis specific. In testis, it is expressed in developing germ cells, but not in Leydig cells. Weakly or not expressed in other tissues.

Its subcellular location is the nucleus. Functionally, cyclins are positive regulatory subunits of the cyclin-dependent kinases (CDKs), and thereby play an essential role in the control of the cell cycle, notably via their destruction during cell division. Its tissue specificity suggest that it may be required during early meiotic prophase I. The protein is G2/mitotic-specific cyclin-B3 (CCNB3) of Homo sapiens (Human).